Reading from the N-terminus, the 666-residue chain is tRNA 5-methylaminomethyl-2-thiouridine biosynthesis bifunctional protein MnmC (666 aa).

The tRNA (mnm(5)s(2)U34)-methyltransferase stretch occupies residues 1 to 245; it reads MKQYAIQPAT…KREMLCGVME (245 aa). The interval 270-666 is FAD-dependent cmnm(5)s(2)U34 oxidoreductase; the sequence is IGGGIASALL…RKLLKGKAVK (397 aa).

This sequence in the N-terminal section; belongs to the methyltransferase superfamily. tRNA (mnm(5)s(2)U34)-methyltransferase family. The protein in the C-terminal section; belongs to the DAO family. FAD serves as cofactor.

It localises to the cytoplasm. It catalyses the reaction 5-aminomethyl-2-thiouridine(34) in tRNA + S-adenosyl-L-methionine = 5-methylaminomethyl-2-thiouridine(34) in tRNA + S-adenosyl-L-homocysteine + H(+). In terms of biological role, catalyzes the last two steps in the biosynthesis of 5-methylaminomethyl-2-thiouridine (mnm(5)s(2)U) at the wobble position (U34) in tRNA. Catalyzes the FAD-dependent demodification of cmnm(5)s(2)U34 to nm(5)s(2)U34, followed by the transfer of a methyl group from S-adenosyl-L-methionine to nm(5)s(2)U34, to form mnm(5)s(2)U34. The sequence is that of tRNA 5-methylaminomethyl-2-thiouridine biosynthesis bifunctional protein MnmC from Salmonella arizonae (strain ATCC BAA-731 / CDC346-86 / RSK2980).